A 194-amino-acid polypeptide reads, in one-letter code: uncharacterized protein (194 aa).

The 61-residue stretch at 2-62 folds into the HTH tetR-type domain; sequence QGPRERMVVS…CEAVDYAGEH (61 aa). A DNA-binding region (H-T-H motif) is located at residues 25 to 44; it reads AISDVLQHSGAPRGSAYHYF.

This is an uncharacterized protein from Mycobacterium tuberculosis (strain CDC 1551 / Oshkosh).